Reading from the N-terminus, the 379-residue chain is Chaperone protein DnaJ (379 aa).

The J domain maps to 5–70 (DYYELLEVSR…QKRAAYDQFG (66 aa)). The segment at 135–213 (GKEVEITVPR…CHGQGRVRES (79 aa)) adopts a CR-type zinc-finger fold. Zn(2+) is bound by residues cysteine 148, cysteine 151, cysteine 165, cysteine 168, cysteine 187, cysteine 190, cysteine 201, and cysteine 204. CXXCXGXG motif repeat units lie at residues 148–155 (CTVCEGSG), 165–172 (CETCQGMG), 187–194 (CPTCHGEG), and 201–208 (CASCHGQG).

Belongs to the DnaJ family. As to quaternary structure, homodimer. The cofactor is Zn(2+).

It localises to the cytoplasm. Functionally, participates actively in the response to hyperosmotic and heat shock by preventing the aggregation of stress-denatured proteins and by disaggregating proteins, also in an autonomous, DnaK-independent fashion. Unfolded proteins bind initially to DnaJ; upon interaction with the DnaJ-bound protein, DnaK hydrolyzes its bound ATP, resulting in the formation of a stable complex. GrpE releases ADP from DnaK; ATP binding to DnaK triggers the release of the substrate protein, thus completing the reaction cycle. Several rounds of ATP-dependent interactions between DnaJ, DnaK and GrpE are required for fully efficient folding. Also involved, together with DnaK and GrpE, in the DNA replication of plasmids through activation of initiation proteins. The protein is Chaperone protein DnaJ of Legionella pneumophila (strain Lens).